A 311-amino-acid polypeptide reads, in one-letter code: Methionyl-tRNA formyltransferase (311 aa).

Serine 110–proline 113 contacts (6S)-5,6,7,8-tetrahydrofolate.

The protein belongs to the Fmt family.

It carries out the reaction L-methionyl-tRNA(fMet) + (6R)-10-formyltetrahydrofolate = N-formyl-L-methionyl-tRNA(fMet) + (6S)-5,6,7,8-tetrahydrofolate + H(+). Its function is as follows. Attaches a formyl group to the free amino group of methionyl-tRNA(fMet). The formyl group appears to play a dual role in the initiator identity of N-formylmethionyl-tRNA by promoting its recognition by IF2 and preventing the misappropriation of this tRNA by the elongation apparatus. In Streptococcus mutans serotype c (strain ATCC 700610 / UA159), this protein is Methionyl-tRNA formyltransferase.